A 193-amino-acid polypeptide reads, in one-letter code: MATPKSFRDNLAEILKTHDFRTVELEFRLGFQAPGEFITNINKHVWTTAKEKLGTPAQELVMVDKYIRSTPGESSRYVVFPDGQGYWEHKKKVAKETTTGGKYGVRSAFSLERRENGKPPVSFRMQRTKYRTTFVKGPWKIDFTRVESIPATDRDCESTYEIEVELYDMFYLFEKELDIIIQEGNKLVQSIVM.

It depends on Mn(2+) as a cofactor.

The enzyme catalyses a 5'-end triphospho-ribonucleoside in mRNA + H2O = a 5'-end diphospho-ribonucleoside in mRNA + phosphate + H(+). In terms of biological role, catalyzes the first stes of cap formation: by removing the gamma-phosphate from the 5'-triphosphate end of nascent mRNA to yield a diphosphate end. This Chlorella (PBCV-1) protein is 5'RNA triphosphatase A449R (A449R).